The following is a 555-amino-acid chain: MAQCNLFYQYPITPILEGHVRNILICTEEDIRRLQSQSSLRLREKIDQGHRDKLLRMRLKTELDALQRKMQKDSDVLNSHLKAIEDALLFTNDGEVNVETKADTQLLPKSPERLEKFNQVAITPLDPFIRFTDDFRGEMINTFFNNAQMWNFTFGSWFYKLKRVFYNEPGLRRALKITNVDSLTISKELLTVTVNALEQATVYPIFGSEMSDLEAALCILAAFYSTYENSQIDERTTLVDIITLLPVIFRLLGSEITALKNVSPSGTYFGFNDPSCMKFFVPMRKGKHYAENTFGNHVLVKMLLGRGVMQKIPGEKDSQNFDVEARLHGAIKNDVLVYWTYQLMRPKLGNNVPIFIHDQHYLRSGLVAIESLFLLWRILNSESLFNKRVGKFLLTSIFPQLENVDFAENNFEAGNIQNFEYLMHHYVVPMYNLQNDISISTLFPGLVAVCVNESVRLGWEHKCAGAPSDAVQVQSKENPFVEYIRAQMEQQADVAILEKHDCILFHFENGLNITLSFTLPRQRLFAMASSLFNVNDTYDFIYFLVLGFLPIPAII.

Residues 1-47 are interaction with major capsid protein/MCP; it reads MAQCNLFYQYPITPILEGHVRNILICTEEDIRRLQSQSSLRLREKID.

This sequence belongs to the herpesviridae CVC2 protein family. As to quaternary structure, heterodimerizes with CVC1. Interacts with major capsid protein/MCP and triplex capsid protein 1/TRX1 at the pentamer vertices. Interacts with the large tegument protein/LTP.

Its subcellular location is the virion. The protein resides in the host nucleus. Functionally, capsid vertex-specific component that plays a role during viral DNA encapsidation, assuring correct genome cleavage and presumably stabilizing capsids that contain full-length viral genomes. Participates in the interaction between the capsid and the tegument through interaction with the large tegument protein/LTP. The sequence is that of Capsid vertex component 2 from Homo sapiens (Human).